Reading from the N-terminus, the 83-residue chain is Mu-theraphotoxin-Hhn2m (83 aa).

The first 21 residues, Met-1–Ala-21, serve as a signal peptide directing secretion. Residues Ser-22–Arg-48 constitute a propeptide that is removed on maturation. Disulfide bonds link Cys-50/Cys-65, Cys-57/Cys-70, and Cys-64/Cys-77. Leu-81 carries the post-translational modification Leucine amide.

It belongs to the neurotoxin 10 (Hwtx-1) family. 15 (Hntx-3) subfamily. As to quaternary structure, monomer. As to expression, expressed by the venom gland.

It is found in the secreted. In terms of biological role, lethal neurotoxin. Selectively blocks tetrodotoxin-sensitive voltage-gated sodium channels (Nav). Does not affect tetrodotoxin-resistant voltage-gated sodium channels or calcium channels. The chain is Mu-theraphotoxin-Hhn2m from Cyriopagopus hainanus (Chinese bird spider).